The following is a 301-amino-acid chain: WD repeat-containing protein SL1-17 (301 aa).

WD repeat units lie at residues 11–54, 59–98, 101–140, 143–182, 184–223, 227–266, and 269–300; these read AHKE…LKCL, GHRL…LTKT, GDPA…KEGS, LEGK…VQFL, GHAT…LVIP, GHKG…EKHC, and THED…IYQC.

This chain is WD repeat-containing protein SL1-17, found in Schistosoma mansoni (Blood fluke).